A 166-amino-acid chain; its full sequence is Cytochrome c-550 2 (166 aa).

Residues 1 to 32 (MFSRQFGRLATLALALAVAGCAGGEQSTTAEA) form the signal peptide. Cys71, Cys74, and His75 together coordinate heme c.

This sequence belongs to the cytochrome c family. PsbV subfamily. The cofactor is heme c.

The protein localises to the cell inner membrane. Probable low-potential cytochrome c, might function in photosystem II (PSII). This is Cytochrome c-550 2 (psbV2) from Gloeobacter violaceus (strain ATCC 29082 / PCC 7421).